A 33-amino-acid polypeptide reads, in one-letter code: Pardaxin P-1 (33 aa).

The protein belongs to the pardaxin family. In terms of assembly, in aqueous solution exists as a tetramer.

It is found in the secreted. The protein resides in the target cell membrane. Its function is as follows. Exhibits unusual shark repellent and surfactant properties. Forms voltage-dependent, ion-permeable channels in membranes. At high concentration causes cell membrane lysis. Causes death in killfish oryzias latipes in 30 minutes at a concentration of 25 micrograms/ml. This is Pardaxin P-1 from Pardachirus pavoninus (Peacock sole).